The sequence spans 367 residues: High osmolarity signaling protein SHO1 (367 aa).

Over 1–32 (MSISSKIRPTPRKPSRMATDHSFKMKNFYADP) the chain is Cytoplasmic. A helical transmembrane segment spans residues 33–53 (FAISSISLAIVSWVIAIGGSI). The Extracellular portion of the chain corresponds to 54-65 (SSASTNESFPRF). N-linked (GlcNAc...) asparagine glycosylation occurs at Asn-59. A helical membrane pass occupies residues 66-86 (TWWGIVYQFLTICSLMLFYCF). Residues 87-93 (DLVDHYR) are Cytoplasmic-facing. Residues 94–114 (IFITTSIAVAFVYNTNSATNL) traverse the membrane as a helical segment. Residues 115 to 122 (VYADGSKK) lie on the Extracellular side of the membrane. The helical transmembrane segment at 123 to 143 (AAASAGVILLSIINLIWILYY) threads the bilayer. The Cytoplasmic segment spans residues 144–367 (GGDNASPTNR…LIDGPEEMHR (224 aa)). Ser-166 is subject to Phosphoserine. The segment at 253–276 (NAKETNDNSNNQTNTNIGNTFDTD) is disordered. Low complexity predominate over residues 259–272 (DNSNNQTNTNIGNT). Residues 300–361 (NFIYKAKALY…PSNYVQLIDG (62 aa)) form the SH3 domain.

Belongs to the SHO1 family. Forms homooligomers. Interacts (via the SH3 domain) with PBS2. Interacts with FUS1, STE11, STE50 and RNA polymerase II.

The protein resides in the cell membrane. It localises to the bud. Its subcellular location is the bud neck. It is found in the cell projection. Functionally, plasma membrane osmosensor that activates the high osmolarity glycerol (HOG) MAPK signaling pathway in response to high osmolarity. Detects changes in external osmolarity and activates PBS2 through the stimulation of STE11 and targets PBS2 to the plasma membrane. PBS2 activation leads to changes in glycerol production that helps to balance the intracellular and external osmotic pressures. Activates also HOG1 in response to heat stress and mediates resistance to oxidative stress. Involved in the regulation of the mating pathway. May be a receptor that feeds into the pseudohyphal growth pathway. In Saccharomyces cerevisiae (strain YJM789) (Baker's yeast), this protein is High osmolarity signaling protein SHO1 (SHO1).